Reading from the N-terminus, the 615-residue chain is MSKYTILDKINTPSDLKLIPESQLKILSAELRAFLVDTLDVSGGHFASSLGATELTVALHYVYNAPDDNIVWDVGHQTYIHKILTGRKDKLVTIKKDGGISGFPKRSESEYDTFGVGHSSTSISAALGMAIADRLQGKSSNTVAVIGDGAITGGMAFEALNHAGGIKEDILVILNDNEMSISDNVGGLSAHFSKIISGGFYNSIREKGKEVLKNIPPIFEFVKKVETQTKGMFVPANFFEDLGFYYVGPIDGHDVTELVKTLRILKDHKGPKLLHVITKKGKGYTKAESDPIKFHHVAPSFHSGENITTKISKPTYSNIFGDWICQKAAKDKRLVGITPAMKEGSDLIRFSQLYPHRYFDVAIAEQHAVTFAGGLACQGLKPVVAIYSTFLQRAYDQVIHDIALQNLDVLYAVDRAGLVGADGATHDGSFDLAFMRCIPNHVIMTPSDENEAYHMLEFGYEYNGPAMVRYPRGAGIGAEITGSLDLELGKAKIVKQGSKIAILNFGTLLPLAKQLAEKYHATVIDMRFVKPLDEIMLDKVSQTYEIILTLEENCIAGGAGSAVNEYFVAKDLSNKIIVRNFGLQDKFLNHGTKDLLLAQSKLCVENISQELDKLI.

Residues His-76 and 117-119 (GHS) each bind thiamine diphosphate. Mg(2+) is bound at residue Asp-148. Thiamine diphosphate is bound by residues 149–150 (GA), Asn-177, Tyr-284, and Glu-365. Asn-177 contacts Mg(2+).

It belongs to the transketolase family. DXPS subfamily. Homodimer. The cofactor is Mg(2+). Thiamine diphosphate serves as cofactor.

It catalyses the reaction D-glyceraldehyde 3-phosphate + pyruvate + H(+) = 1-deoxy-D-xylulose 5-phosphate + CO2. It participates in metabolic intermediate biosynthesis; 1-deoxy-D-xylulose 5-phosphate biosynthesis; 1-deoxy-D-xylulose 5-phosphate from D-glyceraldehyde 3-phosphate and pyruvate: step 1/1. In terms of biological role, catalyzes the acyloin condensation reaction between C atoms 2 and 3 of pyruvate and glyceraldehyde 3-phosphate to yield 1-deoxy-D-xylulose-5-phosphate (DXP). The protein is 1-deoxy-D-xylulose-5-phosphate synthase of Francisella tularensis subsp. mediasiatica (strain FSC147).